We begin with the raw amino-acid sequence, 280 residues long: Cytochrome bc1 complex cytochrome c subunit (280 aa).

A helical membrane pass occupies residues 25–45; the sequence is LSGGVLLLIALTIAGGLAAVL. Cytochrome c domains lie at 60–140 and 161–239; these read ALLR…QANG and NDLG…KVAT. The heme c site is built by C73, C76, H77, C174, C177, and H178. A helical transmembrane segment spans residues 258–278; it reads GMAMWIIGMVAAIGLALWIGA.

As to quaternary structure, the cytochrome bc1 complex is composed of a cytochrome b (QcrB), the Rieske iron-sulfur protein (QcrA) and a diheme cytochrome c (QcrC) subunit. Binds 2 heme c groups covalently per subunit.

Its subcellular location is the cell membrane. It carries out the reaction a quinol + 2 Fe(III)-[cytochrome c](out) = a quinone + 2 Fe(II)-[cytochrome c](out) + 2 H(+)(out). Cytochrome b subunit of the cytochrome bc1 complex, an essential component of the respiratory electron transport chain required for ATP synthesis. The bc1 complex catalyzes the oxidation of ubiquinol and the reduction of cytochrome c in the respiratory chain. The bc1 complex operates through a Q-cycle mechanism that couples electron transfer to generation of the proton gradient that drives ATP synthesis. The chain is Cytochrome bc1 complex cytochrome c subunit (qcrC) from Mycobacterium bovis (strain ATCC BAA-935 / AF2122/97).